The chain runs to 129 residues: Fluoride-specific ion channel FluC 2 (129 aa).

4 helical membrane-spanning segments follow: residues 3–23 (FLYVGIFGALGGMCRYAMNLW), 32–52 (ATLAVNLIGCFLLAFIMPFLA), 59–79 (LVLLNGIGTGFIGAFTTFSAF), and 90–110 (GEVVLAISYILVSLIGGLVMV). G71 and T74 together coordinate Na(+).

It belongs to the fluoride channel Fluc/FEX (TC 1.A.43) family.

The protein resides in the cell membrane. The catalysed reaction is fluoride(in) = fluoride(out). Na(+) is not transported, but it plays an essential structural role and its presence is essential for fluoride channel function. Its function is as follows. Fluoride-specific ion channel. Important for reducing fluoride concentration in the cell, thus reducing its toxicity. The polypeptide is Fluoride-specific ion channel FluC 2 (Listeria innocua serovar 6a (strain ATCC BAA-680 / CLIP 11262)).